The chain runs to 358 residues: Dual-specificity RNA methyltransferase RlmN (358 aa).

The Proton acceptor role is filled by Glu-86. One can recognise a Radical SAM core domain in the interval 105-338 (RHKRYTICVS…CTIRQSKGLD (234 aa)). Cys-112 and Cys-343 form a disulfide bridge. Residues Cys-119, Cys-123, and Cys-126 each contribute to the [4Fe-4S] cluster site. S-adenosyl-L-methionine-binding positions include 169–170 (GE), Ser-201, 224–226 (SLH), and Asn-300. Cys-343 acts as the S-methylcysteine intermediate in catalysis.

It belongs to the radical SAM superfamily. RlmN family. [4Fe-4S] cluster is required as a cofactor.

It is found in the cytoplasm. It carries out the reaction adenosine(2503) in 23S rRNA + 2 reduced [2Fe-2S]-[ferredoxin] + 2 S-adenosyl-L-methionine = 2-methyladenosine(2503) in 23S rRNA + 5'-deoxyadenosine + L-methionine + 2 oxidized [2Fe-2S]-[ferredoxin] + S-adenosyl-L-homocysteine. It catalyses the reaction adenosine(37) in tRNA + 2 reduced [2Fe-2S]-[ferredoxin] + 2 S-adenosyl-L-methionine = 2-methyladenosine(37) in tRNA + 5'-deoxyadenosine + L-methionine + 2 oxidized [2Fe-2S]-[ferredoxin] + S-adenosyl-L-homocysteine. Specifically methylates position 2 of adenine 2503 in 23S rRNA and position 2 of adenine 37 in tRNAs. m2A2503 modification seems to play a crucial role in the proofreading step occurring at the peptidyl transferase center and thus would serve to optimize ribosomal fidelity. This is Dual-specificity RNA methyltransferase RlmN from Campylobacter hominis (strain ATCC BAA-381 / DSM 21671 / CCUG 45161 / LMG 19568 / NCTC 13146 / CH001A).